We begin with the raw amino-acid sequence, 270 residues long: tRNA pseudouridine synthase A (270 aa).

Asp60 serves as the catalytic Nucleophile. Tyr118 contacts substrate.

Belongs to the tRNA pseudouridine synthase TruA family. In terms of assembly, homodimer.

The catalysed reaction is uridine(38/39/40) in tRNA = pseudouridine(38/39/40) in tRNA. Functionally, formation of pseudouridine at positions 38, 39 and 40 in the anticodon stem and loop of transfer RNAs. The polypeptide is tRNA pseudouridine synthase A (Cronobacter sakazakii (strain ATCC BAA-894) (Enterobacter sakazakii)).